A 171-amino-acid chain; its full sequence is Large ribosomal subunit protein uL10 (171 aa).

Belongs to the universal ribosomal protein uL10 family. Part of the ribosomal stalk of the 50S ribosomal subunit. The N-terminus interacts with L11 and the large rRNA to form the base of the stalk. The C-terminus forms an elongated spine to which L12 dimers bind in a sequential fashion forming a multimeric L10(L12)X complex.

In terms of biological role, forms part of the ribosomal stalk, playing a central role in the interaction of the ribosome with GTP-bound translation factors. The chain is Large ribosomal subunit protein uL10 from Corynebacterium diphtheriae (strain ATCC 700971 / NCTC 13129 / Biotype gravis).